A 237-amino-acid chain; its full sequence is Uridylate kinase (237 aa).

Residue 9–12 participates in ATP binding; that stretch reads KFSG. An involved in allosteric activation by GTP region spans residues 17 to 22; that stretch reads GEAGYG. Glycine 51 is a binding site for UMP. Residues glycine 52 and arginine 56 each contribute to the ATP site. UMP contacts are provided by residues aspartate 72 and 133–140; that span reads TGNPFFTT. Residues threonine 160, tyrosine 166, and aspartate 169 each coordinate ATP.

It belongs to the UMP kinase family. In terms of assembly, homohexamer.

The protein resides in the cytoplasm. The catalysed reaction is UMP + ATP = UDP + ADP. It participates in pyrimidine metabolism; CTP biosynthesis via de novo pathway; UDP from UMP (UMPK route): step 1/1. Allosterically activated by GTP. Inhibited by UTP. Catalyzes the reversible phosphorylation of UMP to UDP. The sequence is that of Uridylate kinase from Sulfurimonas denitrificans (strain ATCC 33889 / DSM 1251) (Thiomicrospira denitrificans (strain ATCC 33889 / DSM 1251)).